Reading from the N-terminus, the 471-residue chain is Thiohydroximate-O-sulfate sulfur/sulfate-lyase (nitrile-forming) NSP2 (471 aa).

Residues 2–144 (VQKVEARGGE…LHSLGAYISS (143 aa)) enclose the Jacalin-type lectin domain. 6 Kelch repeats span residues 178 to 226 (KIFS…VRMV), 231 to 277 (SLYV…SMTA), 281 to 330 (NVYV…VVQG), 332 to 379 (VWVV…VVGK), 381 to 435 (ILVF…GWSA), and 446 to 471 (GLVMFGGKAQTNDRFGDLFFYGVDSA). The active-site Proton donor is R238. Positions 238, 271, 293, 322, and 371 each coordinate a (Z)-N-(sulfonatooxy)alkanimidothioate. R293 (proton donor) is an active-site residue. The Fe(2+) site is built by E387, D391, and H395. W433 lines the a (Z)-N-(sulfonatooxy)alkanimidothioate pocket.

The protein belongs to the jacalin lectin family. The cofactor is Fe(2+). Expressed only in seeds.

It catalyses the reaction a (Z)-N-(sulfonatooxy)alkanimidothioate = a nitrile + sulfur + sulfate. It carries out the reaction (Z)-phenyl-N-(sulfonatooxy)methanimidothioate = phenylacetonitrile + sulfur + sulfate. The enzyme catalyses (Z)-N-(sulfonatooxy)prop-2-enimidothioate = but-3-enenitrile + sulfur + sulfate. The catalysed reaction is (Z)-(indol-3-yl)-N-(sulfonatooxy)methanimidothioate = (indol-3-yl)acetonitrile + sulfur + sulfate. The presence of Fe(2+) supports lyase activity in a dose-dependent manner with both benzylglucosinolate and 2-propenylglucosinolate as substrates. More active at pH 7.4 than at pH 6. Functionally, specifier protein responsible for constitutive and herbivore-induced simple nitrile formation, especially in seeds. Promotes simple nitriles, but not epithionitrile or thiocyanate formation. Converts allylglucosinolate (allyl-GSL), 2-propenylglucosinolate (sinigrin), indol-3-ylmethylglucosinolate (glucobrassicin), benzylisothiocyanate and benzylglucosinolate (glucotropaeolin) to their corresponding simple nitriles in the presence of myrosinase. Catalyzes mainly the conversion of benzylisothiocyanate when benzylglucosinolate is used as the initial substrate of myrosinase. Involved in the regulation of glucosinolate content in seeds, during stratification and germination. The polypeptide is Thiohydroximate-O-sulfate sulfur/sulfate-lyase (nitrile-forming) NSP2 (Arabidopsis thaliana (Mouse-ear cress)).